A 218-amino-acid chain; its full sequence is Cytidylate kinase (218 aa).

An ATP-binding site is contributed by 10–18 (GPAGSGKST).

Belongs to the cytidylate kinase family. Type 1 subfamily.

The protein resides in the cytoplasm. The enzyme catalyses CMP + ATP = CDP + ADP. It catalyses the reaction dCMP + ATP = dCDP + ADP. This chain is Cytidylate kinase, found in Fusobacterium nucleatum subsp. nucleatum (strain ATCC 25586 / DSM 15643 / BCRC 10681 / CIP 101130 / JCM 8532 / KCTC 2640 / LMG 13131 / VPI 4355).